The chain runs to 322 residues: Breast cancer metastasis-suppressor 1-like protein (322 aa).

Positions 1 to 16 are enriched in basic and acidic residues; that stretch reads MPVHSREKKESNHNDM. The disordered stretch occupies residues 1-56; the sequence is MPVHSREKKESNHNDMEVDYPENEGTSSEEDDSDSSSGSEEGDSSEMDDEDCERRR. Acidic residues predominate over residues 17 to 51; sequence EVDYPENEGTSSEEDDSDSSSGSEEGDSSEMDDED. 2 coiled-coil regions span residues 50–82 and 147–178; these read EDCE…KERL and EKLL…ITSE.

Belongs to the BRMS1 family.

It localises to the nucleus. In terms of biological role, involved in the histone deacetylase (HDAC1)-dependent transcriptional repression activity. The protein is Breast cancer metastasis-suppressor 1-like protein (brms1l) of Xenopus tropicalis (Western clawed frog).